The sequence spans 348 residues: Phenylalanine--tRNA ligase alpha subunit (348 aa).

Glutamate 259 contacts Mg(2+).

The protein belongs to the class-II aminoacyl-tRNA synthetase family. Phe-tRNA synthetase alpha subunit type 1 subfamily. As to quaternary structure, tetramer of two alpha and two beta subunits. Mg(2+) serves as cofactor.

It is found in the cytoplasm. The catalysed reaction is tRNA(Phe) + L-phenylalanine + ATP = L-phenylalanyl-tRNA(Phe) + AMP + diphosphate + H(+). This is Phenylalanine--tRNA ligase alpha subunit from Latilactobacillus sakei subsp. sakei (strain 23K) (Lactobacillus sakei subsp. sakei).